A 151-amino-acid chain; its full sequence is Ubiquitin-conjugating enzyme E2 W (151 aa).

Met-1 participates in a covalent cross-link: Peptide (Met-Gly) (interchain with G-Cter in ubiquitin). Residues Ser-3 to Cys-151 enclose the UBC core domain. Cys-91 acts as the Glycyl thioester intermediate in catalysis.

This sequence belongs to the ubiquitin-conjugating enzyme family. Homodimer. Interacts with FANCL. Interacts with STUB1/CHIP. Ubiquitinated in vitro in the presence of FANCL. Autoubiquitinated at Met-1.

It is found in the nucleus. The catalysed reaction is S-ubiquitinyl-[E1 ubiquitin-activating enzyme]-L-cysteine + [E2 ubiquitin-conjugating enzyme]-L-cysteine = [E1 ubiquitin-activating enzyme]-L-cysteine + S-ubiquitinyl-[E2 ubiquitin-conjugating enzyme]-L-cysteine.. The enzyme catalyses S-ubiquitinyl-[E1 ubiquitin-activating enzyme]-L-cysteine + [acceptor protein]-N-terminal-amino acid = [E1 ubiquitin-activating enzyme]-L-cysteine + N-terminal-ubiquitinyl-[acceptor protein].. It participates in protein modification; protein ubiquitination. Its function is as follows. Accepts ubiquitin from the E1 complex and catalyzes its covalent attachment to other proteins. Specifically monoubiquitinates the N-terminus of various substrates, including ATXN3, MAPT/TAU, POLR2H/RPB8 and STUB1/CHIP, by recognizing backbone atoms of disordered N-termini. Involved in degradation of misfolded chaperone substrates by mediating monoubiquitination of STUB1/CHIP, leading to recruitment of ATXN3 to monoubiquitinated STUB1/CHIP, and restriction of the length of ubiquitin chain attached to STUB1/CHIP substrates by ATXN3. After UV irradiation, but not after mitomycin-C (MMC) treatment, acts as a specific E2 ubiquitin-conjugating enzyme for the Fanconi anemia complex by associating with E3 ubiquitin-protein ligase FANCL and catalyzing monoubiquitination of FANCD2, a key step in the DNA damage pathway. In vitro catalyzes 'Lys-11'-linked polyubiquitination. UBE2W-catalyzed ubiquitination also occurs in the presence of inactive RING/U-box type E3s, i.e. lacking the active site cysteine residues to form thioester bonds with ubiquitin, or even in the absence of E3, albeit at a slower rate. The chain is Ubiquitin-conjugating enzyme E2 W (UBE2W) from Bos taurus (Bovine).